Here is an 887-residue protein sequence, read N- to C-terminus: Microsomal triglyceride transfer protein large subunit (887 aa).

A signal peptide spans 1-11 (FLCFISSYSAS). Residues 21 to 655 (LNNDRLYKLT…YIEKTPLHGI (635 aa)) form the Vitellogenin domain. A disulfide bridge links Cys-167 with Cys-187.

As to quaternary structure, heterodimer; heterodimerizes with the protein disulfide isomerase (P4HB/PDI). Interacts with APOB. Interacts with PRAP1.

It localises to the endoplasmic reticulum. Its subcellular location is the golgi apparatus. It catalyses the reaction a 1,2-diacyl-sn-glycero-3-phosphocholine(in) = a 1,2-diacyl-sn-glycero-3-phosphocholine(out). The catalysed reaction is a 1,2-diacyl-sn-glycero-3-phosphoethanolamine(in) = a 1,2-diacyl-sn-glycero-3-phosphoethanolamine(out). It carries out the reaction a cholesterol ester(in) = a cholesterol ester(out). The enzyme catalyses a triacyl-sn-glycerol(in) = a triacyl-sn-glycerol(out). Catalyzes the transport of triglyceride, cholesteryl ester, and phospholipid between phospholipid surfaces. Required for the assembly and secretion of plasma lipoproteins that contain apolipoprotein B. May be involved in regulating cholesteryl ester biosynthesis in cells that produce lipoproteins. The sequence is that of Microsomal triglyceride transfer protein large subunit (MTTP) from Bos taurus (Bovine).